Reading from the N-terminus, the 106-residue chain is uncharacterized protein (106 aa).

3 helical membrane passes run 4–24 (LPVVIISIVLFFVLFFGIGFL), 27–47 (MLLRMSWIMAVIYPIVCLFII), and 78–98 (VLILVSGLAGAIVSGIAINML).

It localises to the cell membrane. This is an uncharacterized protein from Bacillus subtilis (strain 168).